A 34-amino-acid chain; its full sequence is Photosystem II reaction center protein M (34 aa).

The chain crosses the membrane as a helical span at residues 5-25 (ILAFIATALFILVPTSFLLII).

This sequence belongs to the PsbM family. As to quaternary structure, PSII is composed of 1 copy each of membrane proteins PsbA, PsbB, PsbC, PsbD, PsbE, PsbF, PsbH, PsbI, PsbJ, PsbK, PsbL, PsbM, PsbT, PsbX, PsbY, PsbZ, Psb30/Ycf12, at least 3 peripheral proteins of the oxygen-evolving complex and a large number of cofactors. It forms dimeric complexes.

It localises to the plastid. The protein localises to the chloroplast thylakoid membrane. Functionally, one of the components of the core complex of photosystem II (PSII). PSII is a light-driven water:plastoquinone oxidoreductase that uses light energy to abstract electrons from H(2)O, generating O(2) and a proton gradient subsequently used for ATP formation. It consists of a core antenna complex that captures photons, and an electron transfer chain that converts photonic excitation into a charge separation. This subunit is found at the monomer-monomer interface. The sequence is that of Photosystem II reaction center protein M from Triticum aestivum (Wheat).